Reading from the N-terminus, the 115-residue chain is Holo-[acyl-carrier-protein] synthase (115 aa).

Mg(2+) is bound by residues aspartate 6 and glutamate 51.

This sequence belongs to the P-Pant transferase superfamily. AcpS family. Requires Mg(2+) as cofactor.

Its subcellular location is the cytoplasm. The catalysed reaction is apo-[ACP] + CoA = holo-[ACP] + adenosine 3',5'-bisphosphate + H(+). Transfers the 4'-phosphopantetheine moiety from coenzyme A to a Ser of acyl-carrier-protein. The polypeptide is Holo-[acyl-carrier-protein] synthase (Campylobacter jejuni subsp. doylei (strain ATCC BAA-1458 / RM4099 / 269.97)).